Here is a 249-residue protein sequence, read N- to C-terminus: Dihydroneopterin 2',3'-cyclic phosphate phosphodiesterase (249 aa).

The HD domain maps to 58–172 (LIEHTISVTK…VHYADEADSK (115 aa)).

In terms of assembly, homododecamer. It depends on Fe(2+) as a cofactor. Zn(2+) serves as cofactor.

It catalyses the reaction 7,8-dihydroneopterin 2',3'-cyclic phosphate + H2O = 7,8-dihydroneopterin 3'-phosphate + H(+). The enzyme catalyses 7,8-dihydroneopterin 2',3'-cyclic phosphate + H2O = 7,8-dihydroneopterin 2'-phosphate + H(+). It functions in the pathway cofactor biosynthesis; 5,6,7,8-tetrahydromethanopterin biosynthesis. Cyclic phosphodiesterase that hydrolyzes the cyclic phosphate of 7,8-dihydroneopterin 2',3'-cyclic phosphate (H2N-cP) and converts it to a mixture of 7,8-dihydroneopterin 2'-phosphate (H2N-2'P) and 7,8-dihydroneopterin 3'-phosphate (H2N-3'P). Is also able to utilize other phosphodiesters as substrates in vitro: hydrolysis of bis-pNPP and pNPPC produces nitrophenyl phosphate, and that of 2',3'-cAMP produces 3'-AMP. ATP, 3',5'-cAMP, GTP, 3',5'-cGMP, and 4',5'-cFMN cannot serve as substrates. This Methanocaldococcus jannaschii (strain ATCC 43067 / DSM 2661 / JAL-1 / JCM 10045 / NBRC 100440) (Methanococcus jannaschii) protein is Dihydroneopterin 2',3'-cyclic phosphate phosphodiesterase (mptB).